Reading from the N-terminus, the 154-residue chain is Jupiter microtubule associated homolog 1 (154 aa).

M1 carries the N-acetylmethionine modification. The segment covering 1 to 19 has biased composition (polar residues); the sequence is MTTTTTFKGVDPNSRNSSR. Residues 1-154 are disordered; sequence MTTTTTFKGV…PGGKSSLVLG (154 aa). N-acetylthreonine; in Hematological and neurological expressed 1 protein, N-terminally processed is present on T2. S28 and S31 each carry phosphoserine. Residues 47–59 show a composition bias toward polar residues; that stretch reads MASNIFGTPEENQ. A Phosphothreonine modification is found at T54. The span at 60-71 shows a compositional bias: low complexity; it reads ASWAKSAGAKSS. 5 positions are modified to phosphoserine: S71, S80, S87, S88, and S92. Polar residues predominate over residues 80 to 91; the sequence is SGLQRRNSSEAS. Residues 96-108 are compositionally biased toward basic and acidic residues; it reads LDLKGEGDIHENV. Positions 125-138 are enriched in pro residues; that stretch reads PAAPVPSPVAPAPV. Position 131 is a phosphoserine (S131). At K148 the chain carries N6-acetyllysine.

Belongs to the JUPITER family. Interacts with the complex composed, at least, of APC, CTNNB1 and GSK3B; the interaction takes place with the inactive form of GSK3B (phosphorylated at 'Ser-9'). As to expression, expressed in testis, skeletal muscle, thymus, prostate, colon, peripheral blood cells, brain and placenta.

The protein resides in the nucleus. Its subcellular location is the cytoplasm. Functionally, modulates negatively AKT-mediated GSK3B signaling. Induces CTNNB1 'Ser-33' phosphorylation and degradation through the suppression of the inhibitory 'Ser-9' phosphorylation of GSK3B, which represses the function of the APC:CTNNB1:GSK3B complex and the interaction with CDH1/E-cadherin in adherent junctions. Plays a role in the regulation of cell cycle and cell adhesion. Has an inhibitory role on AR-signaling pathway through the induction of receptor proteasomal degradation. The polypeptide is Jupiter microtubule associated homolog 1 (Homo sapiens (Human)).